The sequence spans 603 residues: Methylenetetrahydrofolate reductase 1 (603 aa).

E21 functions as the Proton donor/acceptor in the catalytic mechanism. NAD(+)-binding positions include 21–26 (EFFPPK) and 53–54 (TW). Residues 53-54 (TW), H82, 112-114 (RGD), 130-131 (YA), Y153, and K173 each bind FAD. D114 is a substrate binding site. Q184 and Y276 together coordinate substrate. S355 is subject to Phosphoserine.

Belongs to the methylenetetrahydrofolate reductase family. It depends on FAD as a cofactor.

The catalysed reaction is (6S)-5-methyl-5,6,7,8-tetrahydrofolate + NADP(+) = (6R)-5,10-methylene-5,6,7,8-tetrahydrofolate + NADPH + H(+). It catalyses the reaction (6S)-5-methyl-5,6,7,8-tetrahydrofolate + NAD(+) = (6R)-5,10-methylene-5,6,7,8-tetrahydrofolate + NADH + H(+). It participates in one-carbon metabolism; tetrahydrofolate interconversion. In terms of biological role, major methylenetetrahydrofolate reductase required to generate the methyl groups necessary for methionine synthetase to convert homocysteine to methionine. Performs 80 to 85 percent of the total methylenetetrahydrofolate reductase activity of the cells. The polypeptide is Methylenetetrahydrofolate reductase 1 (met9) (Schizosaccharomyces pombe (strain 972 / ATCC 24843) (Fission yeast)).